The primary structure comprises 152 residues: MTHSVQLKILDKRLGSEFPLPAYATKGSAGLDLRACLDEPLKIEPDETCLISTGLAIYLGHSNVAATILPRSGLGHKHGIVLGNLVGLIDSDYQGPLMVSCWNRGKEPYTINPGDRIAQLVVLPILKAQFAVVEEFELTERGAGGFGSSGQN.

Substrate-binding positions include 71–73, asparagine 84, 88–90, and methionine 98; these read RSG and LID.

This sequence belongs to the dUTPase family. Mg(2+) is required as a cofactor.

It carries out the reaction dUTP + H2O = dUMP + diphosphate + H(+). It participates in pyrimidine metabolism; dUMP biosynthesis; dUMP from dCTP (dUTP route): step 2/2. This enzyme is involved in nucleotide metabolism: it produces dUMP, the immediate precursor of thymidine nucleotides and it decreases the intracellular concentration of dUTP so that uracil cannot be incorporated into DNA. This Coxiella burnetii (strain Dugway 5J108-111) protein is Deoxyuridine 5'-triphosphate nucleotidohydrolase.